The sequence spans 792 residues: Probable exo-1,4-beta-xylosidase xlnD (792 aa).

The first 20 residues, 1–20 (MSAIKSIATVLAAILPSVLA), serve as a signal peptide directing secretion. N-linked (GlcNAc...) asparagine glycans are attached at residues Asn-23, Asn-87, Asn-142, and Asn-246. Asp-310 is an active-site residue. 10 N-linked (GlcNAc...) asparagine glycosylation sites follow: Asn-326, Asn-385, Asn-391, Asn-404, Asn-438, Asn-475, Asn-479, Asn-516, Asn-677, and Asn-699.

Belongs to the glycosyl hydrolase 3 family.

It is found in the secreted. The catalysed reaction is Hydrolysis of (1-&gt;4)-beta-D-xylans, to remove successive D-xylose residues from the non-reducing termini.. It functions in the pathway glycan degradation; xylan degradation. In terms of biological role, xylan 1,4-beta-xylosidase involved in the hydrolysis of xylan, a major structural heterogeneous polysaccharide found in plant biomass representing the second most abundant polysaccharide in the biosphere, after cellulose. This is Probable exo-1,4-beta-xylosidase xlnD (xlnD) from Aspergillus clavatus (strain ATCC 1007 / CBS 513.65 / DSM 816 / NCTC 3887 / NRRL 1 / QM 1276 / 107).